A 350-amino-acid polypeptide reads, in one-letter code: Protein-glutamate methylesterase/protein-glutamine glutaminase (350 aa).

Residues 5–122 form the Response regulatory domain; the sequence is KVLCVDDSAL…RDGLIEYSEV (118 aa). At aspartate 56 the chain carries 4-aspartylphosphate. The CheB-type methylesterase domain occupies 152–346; sequence PFASSEKLVI…ERILTRLGDR (195 aa). Residues serine 165, histidine 191, and aspartate 288 contribute to the active site.

It belongs to the CheB family. Phosphorylated by CheA. Phosphorylation of the N-terminal regulatory domain activates the methylesterase activity.

The protein localises to the cytoplasm. It catalyses the reaction [protein]-L-glutamate 5-O-methyl ester + H2O = L-glutamyl-[protein] + methanol + H(+). The catalysed reaction is L-glutaminyl-[protein] + H2O = L-glutamyl-[protein] + NH4(+). In terms of biological role, involved in chemotaxis. Part of a chemotaxis signal transduction system that modulates chemotaxis in response to various stimuli. Catalyzes the demethylation of specific methylglutamate residues introduced into the chemoreceptors (methyl-accepting chemotaxis proteins or MCP) by CheR. Also mediates the irreversible deamidation of specific glutamine residues to glutamic acid. The polypeptide is Protein-glutamate methylesterase/protein-glutamine glutaminase (Bordetella pertussis (strain Tohama I / ATCC BAA-589 / NCTC 13251)).